Reading from the N-terminus, the 320-residue chain is Lipoyl synthase (320 aa).

Over residues 1 to 29 (MIGKLVRDLKIPDQRHPEKAHRPDNDQPR) the composition is skewed to basic and acidic residues. Positions 1–32 (MIGKLVRDLKIPDQRHPEKAHRPDNDQPRKPS) are disordered. 7 residues coordinate [4Fe-4S] cluster: cysteine 60, cysteine 65, cysteine 71, cysteine 86, cysteine 90, cysteine 93, and serine 300. A Radical SAM core domain is found at 71–289 (CWGQGHATMM…EKAAYGKGFL (219 aa)).

This sequence belongs to the radical SAM superfamily. Lipoyl synthase family. Requires [4Fe-4S] cluster as cofactor.

The protein resides in the cytoplasm. The enzyme catalyses [[Fe-S] cluster scaffold protein carrying a second [4Fe-4S](2+) cluster] + N(6)-octanoyl-L-lysyl-[protein] + 2 oxidized [2Fe-2S]-[ferredoxin] + 2 S-adenosyl-L-methionine + 4 H(+) = [[Fe-S] cluster scaffold protein] + N(6)-[(R)-dihydrolipoyl]-L-lysyl-[protein] + 4 Fe(3+) + 2 hydrogen sulfide + 2 5'-deoxyadenosine + 2 L-methionine + 2 reduced [2Fe-2S]-[ferredoxin]. Its pathway is protein modification; protein lipoylation via endogenous pathway; protein N(6)-(lipoyl)lysine from octanoyl-[acyl-carrier-protein]: step 2/2. In terms of biological role, catalyzes the radical-mediated insertion of two sulfur atoms into the C-6 and C-8 positions of the octanoyl moiety bound to the lipoyl domains of lipoate-dependent enzymes, thereby converting the octanoylated domains into lipoylated derivatives. The protein is Lipoyl synthase of Cereibacter sphaeroides (strain ATCC 17025 / ATH 2.4.3) (Rhodobacter sphaeroides).